The following is a 377-amino-acid chain: Nitric oxide reductase FlRd-NAD(+) reductase (377 aa).

The protein belongs to the FAD-dependent oxidoreductase family. Requires FAD as cofactor.

Its subcellular location is the cytoplasm. The catalysed reaction is 2 reduced [nitric oxide reductase rubredoxin domain] + NAD(+) + H(+) = 2 oxidized [nitric oxide reductase rubredoxin domain] + NADH. Its pathway is nitrogen metabolism; nitric oxide reduction. In terms of biological role, one of at least two accessory proteins for anaerobic nitric oxide (NO) reductase. Reduces the rubredoxin moiety of NO reductase. This is Nitric oxide reductase FlRd-NAD(+) reductase from Salmonella paratyphi A (strain AKU_12601).